The following is a 400-amino-acid chain: Delta(12) fatty acid desaturase (400 aa).

Residues leucine 91–alanine 111 traverse the membrane as a helical segment. A Histidine box-1 motif is present at residues histidine 112 to histidine 116. Positions histidine 148–histidine 152 match the Histidine box-2 motif. 3 helical membrane passes run isoleucine 199–methionine 219, phenylalanine 245–alanine 265, and tyrosine 277–histidine 297. The Histidine box-3 motif lies at histidine 339–histidine 343.

It belongs to the fatty acid desaturase type 1 family.

It is found in the membrane. It carries out the reaction (9Z)-octadecenoyl-CoA + 2 Fe(II)-[cytochrome b5] + O2 + 2 H(+) = (9Z,12Z)-octadecadienoyl-CoA + 2 Fe(III)-[cytochrome b5] + 2 H2O. The catalysed reaction is (9Z)-hexadecenoyl-CoA + 2 Fe(II)-[cytochrome b5] + O2 + 2 H(+) = (9Z,12Z)-hexadecadienoyl-CoA + 2 Fe(III)-[cytochrome b5] + 2 H2O. Its pathway is lipid metabolism; polyunsaturated fatty acid biosynthesis. Its function is as follows. Catalyzes the desaturation of oleic acid (Delta(9)-18:1) to linoleic acid (Delta(9), Delta(12)-18:2). The sequence is that of Delta(12) fatty acid desaturase from Mortierella alpina (Oleaginous fungus).